We begin with the raw amino-acid sequence, 689 residues long: Glycine--tRNA ligase beta subunit (689 aa).

This sequence belongs to the class-II aminoacyl-tRNA synthetase family. In terms of assembly, tetramer of two alpha and two beta subunits.

It localises to the cytoplasm. The enzyme catalyses tRNA(Gly) + glycine + ATP = glycyl-tRNA(Gly) + AMP + diphosphate. The sequence is that of Glycine--tRNA ligase beta subunit from Salmonella heidelberg (strain SL476).